Consider the following 274-residue polypeptide: Large ribosomal subunit protein uL2 (274 aa).

The interval 220–259 (VRGAAMNPRDHPHGGGEGRAPRGMSTPKTKWGKPARGVKT) is disordered. Positions 227–239 (PRDHPHGGGEGRA) are enriched in basic and acidic residues. Over residues 249–259 (KWGKPARGVKT) the composition is skewed to basic residues.

It belongs to the universal ribosomal protein uL2 family. Part of the 50S ribosomal subunit. Forms a bridge to the 30S subunit in the 70S ribosome.

Functionally, one of the primary rRNA binding proteins. Required for association of the 30S and 50S subunits to form the 70S ribosome, for tRNA binding and peptide bond formation. It has been suggested to have peptidyltransferase activity; this is somewhat controversial. Makes several contacts with the 16S rRNA in the 70S ribosome. The protein is Large ribosomal subunit protein uL2 of Chloroflexus aggregans (strain MD-66 / DSM 9485).